The primary structure comprises 176 residues: Probable inosine/xanthosine triphosphatase (176 aa).

D36 is a Mg(2+) binding site.

Belongs to the YjjX NTPase family. Homodimer. Mg(2+) serves as cofactor. Requires Mn(2+) as cofactor.

It carries out the reaction XTP + H2O = XDP + phosphate + H(+). It catalyses the reaction ITP + H2O = IDP + phosphate + H(+). In terms of biological role, phosphatase that hydrolyzes non-canonical purine nucleotides such as XTP and ITP to their respective diphosphate derivatives. Probably excludes non-canonical purines from DNA/RNA precursor pool, thus preventing their incorporation into DNA/RNA and avoiding chromosomal lesions. The chain is Probable inosine/xanthosine triphosphatase from Saccharolobus islandicus (strain M.16.4 / Kamchatka #3) (Sulfolobus islandicus).